A 282-amino-acid polypeptide reads, in one-letter code: HTH-type transcriptional activator RhaR (282 aa).

Positions 179 to 277 constitute an HTH araC/xylS-type domain; it reads DKLITRLAAS…GMTPSQWRHL (99 aa). DNA-binding regions (H-T-H motif) lie at residues 196–217 and 244–267; these read DKFC…RQQT and ISDI…TRET.

In terms of assembly, binds DNA as a dimer.

The protein resides in the cytoplasm. Its function is as follows. Activates expression of the rhaSR operon in response to L-rhamnose. This chain is HTH-type transcriptional activator RhaR, found in Shigella flexneri serotype 5b (strain 8401).